Reading from the N-terminus, the 115-residue chain is Protein Rev (115 aa).

S5 and S8 each carry phosphoserine; by host CK2. The tract at residues L18 to N26 is homomultimerization. The interval Y23 to R48 is disordered. Residues T34–R50 carry the Nuclear localization signal and RNA-binding (RRE) motif. Over residues Q36–R48 the composition is skewed to basic residues. Positions L73–D83 match the Nuclear export signal and binding to XPO1 motif. The disordered stretch occupies residues G89–E115. S91 and S98 each carry phosphoserine; by host.

The protein belongs to the HIV-1 REV protein family. Homomultimer; when bound to the RRE. Multimeric assembly is essential for activity and may involve XPO1. Binds to human KPNB1, XPO1, TNPO1, RANBP5 and IPO7. Interacts with the viral Integrase. Interacts with human KHDRBS1. Interacts with human NAP1; this interaction decreases Rev multimerization and stimulates its activity. Interacts with human DEAD-box helicases DDX3 and DDX24; these interactions may serve for viral RNA export to the cytoplasm and packaging, respectively. Interacts with human PSIP1; this interaction may inhibit HIV-1 DNA integration by promoting dissociation of the Integrase-LEDGF/p75 complex. Asymmetrically arginine dimethylated at one site by host PRMT6. Methylation impairs the RNA-binding activity and export of viral RNA from the nucleus to the cytoplasm. Post-translationally, phosphorylated by protein kinase CK2. Presence of, and maybe binding to the N-terminus of the regulatory beta subunit of CK2 is necessary for CK2-mediated Rev's phosphorylation.

The protein localises to the host nucleus. The protein resides in the host nucleolus. It localises to the host cytoplasm. Functionally, escorts unspliced or incompletely spliced viral pre-mRNAs (late transcripts) out of the nucleus of infected cells. These pre-mRNAs carry a recognition sequence called Rev responsive element (RRE) located in the env gene, that is not present in fully spliced viral mRNAs (early transcripts). This function is essential since most viral proteins are translated from unspliced or partially spliced pre-mRNAs which cannot exit the nucleus by the pathway used by fully processed cellular mRNAs. Rev itself is translated from a fully spliced mRNA that readily exits the nucleus. Rev's nuclear localization signal (NLS) binds directly to KPNB1/Importin beta-1 without previous binding to KPNA1/Importin alpha-1. KPNB1 binds to the GDP bound form of RAN (Ran-GDP) and targets Rev to the nucleus. In the nucleus, the conversion from Ran-GDP to Ran-GTP dissociates Rev from KPNB1 and allows Rev's binding to the RRE in viral pre-mRNAs. Rev multimerization on the RRE via cooperative assembly exposes its nuclear export signal (NES) to the surface. Rev can then form a complex with XPO1/CRM1 and Ran-GTP, leading to nuclear export of the complex. Conversion from Ran-GTP to Ran-GDP mediates dissociation of the Rev/RRE/XPO1/RAN complex, so that Rev can return to the nucleus for a subsequent round of export. Beside KPNB1, also seems to interact with TNPO1/Transportin-1, RANBP5/IPO5 and IPO7/RANBP7 for nuclear import. The nucleoporin-like HRB/RIP is an essential cofactor that probably indirectly interacts with Rev to release HIV RNAs from the perinuclear region to the cytoplasm. The polypeptide is Protein Rev (Human immunodeficiency virus type 1 group M subtype B (isolate MN) (HIV-1)).